Here is a 482-residue protein sequence, read N- to C-terminus: Ribosomal protein S6 kinase beta-2 (482 aa).

The tract at residues 1-26 is disordered; it reads MAAVFDLDLETEEGSEGEGEPELSPA. Over residues 7–21 the composition is skewed to acidic residues; that stretch reads LDLETEEGSEGEGEP. The residue at position 15 (Ser15) is a Phosphoserine. A Protein kinase domain is found at 67-328; sequence FELLRVLGKG…AADVQRHPFF (262 aa). Residues 73-81 and Lys99 contribute to the ATP site; that span reads LGKGGYGKV. The Proton acceptor role is filled by Asp194. Residues 329–399 enclose the AGC-kinase C-terminal domain; sequence RHMNWDDLLA…VAPSVLDSIK (71 aa). The interval 407 to 482 is disordered; it reads KLRSPRRLNS…SKRGRGRPGR (76 aa). Phosphoserine occurs at positions 417 and 423. Positions 437-466 are enriched in pro residues; the sequence is PSLPEPTELPLPPLLPPPPPSTTAPLPIRP. The Nuclear localization signal signature appears at 471-477; sequence KKSKRGR. Basic residues predominate over residues 471–482; the sequence is KKSKRGRGRPGR. At Ser473 the chain carries Phosphoserine; by PKC.

Belongs to the protein kinase superfamily. AGC Ser/Thr protein kinase family. S6 kinase subfamily. Phosphorylated and activated by MTOR. Phosphorylation by PKC within the NLS in response to mitogenic stimuli causes cytoplasmic retention.

The protein localises to the cytoplasm. Its subcellular location is the nucleus. The enzyme catalyses L-seryl-[protein] + ATP = O-phospho-L-seryl-[protein] + ADP + H(+). The catalysed reaction is L-threonyl-[protein] + ATP = O-phospho-L-threonyl-[protein] + ADP + H(+). Functionally, phosphorylates specifically ribosomal protein S6. Seems to act downstream of mTOR signaling in response to growth factors and nutrients to promote cell proliferation, cell growth and cell cycle progression in an alternative pathway regulated by MEAK7. In Homo sapiens (Human), this protein is Ribosomal protein S6 kinase beta-2 (RPS6KB2).